A 250-amino-acid chain; its full sequence is 2,3-bisphosphoglycerate-dependent phosphoglycerate mutase (250 aa).

Substrate is bound by residues 12–19 (RHGQSAWN), 25–26 (TG), Arg-64, 91–94 (ERHY), Lys-102, 118–119 (RR), and 185–186 (GN). His-13 functions as the Tele-phosphohistidine intermediate in the catalytic mechanism. Residue Glu-91 is the Proton donor/acceptor of the active site.

Belongs to the phosphoglycerate mutase family. BPG-dependent PGAM subfamily.

The enzyme catalyses (2R)-2-phosphoglycerate = (2R)-3-phosphoglycerate. The protein operates within carbohydrate degradation; glycolysis; pyruvate from D-glyceraldehyde 3-phosphate: step 3/5. Functionally, catalyzes the interconversion of 2-phosphoglycerate and 3-phosphoglycerate. This Corynebacterium efficiens (strain DSM 44549 / YS-314 / AJ 12310 / JCM 11189 / NBRC 100395) protein is 2,3-bisphosphoglycerate-dependent phosphoglycerate mutase.